Reading from the N-terminus, the 407-residue chain is RING finger protein 44 (407 aa).

The tract at residues 26–58 (LSSSPGQLWGRPSNLSVEEHRASAPAGRSPRML) is disordered. The segment at 355 to 396 (CVVCFSDFEVRQLLRVLPCNHEFHAKCVDKWLKANRTCPICR) adopts an RING-type; atypical zinc-finger fold.

This Mus musculus (Mouse) protein is RING finger protein 44 (Rnf44).